The sequence spans 418 residues: Aspartate aminotransferase, cytoplasmic (418 aa).

S2 is modified (N-acetylserine). 3 residues coordinate L-aspartate: G38, W135, and N188. K255 carries the N6-(pyridoxal phosphate)lysine modification. An L-aspartate-binding site is contributed by R387. S389 carries the phosphoserine modification.

Belongs to the class-I pyridoxal-phosphate-dependent aminotransferase family. Homodimer. The cofactor is pyridoxal 5'-phosphate.

It is found in the cytoplasm. Its subcellular location is the peroxisome. It carries out the reaction L-aspartate + 2-oxoglutarate = oxaloacetate + L-glutamate. Plays a key role in amino acid metabolism. The polypeptide is Aspartate aminotransferase, cytoplasmic (AAT2) (Saccharomyces cerevisiae (strain ATCC 204508 / S288c) (Baker's yeast)).